The primary structure comprises 174 residues: Large ribosomal subunit protein uL10 (174 aa).

The protein belongs to the universal ribosomal protein uL10 family. In terms of assembly, part of the ribosomal stalk of the 50S ribosomal subunit. The N-terminus interacts with L11 and the large rRNA to form the base of the stalk. The C-terminus forms an elongated spine to which L12 dimers bind in a sequential fashion forming a multimeric L10(L12)X complex.

Its function is as follows. Forms part of the ribosomal stalk, playing a central role in the interaction of the ribosome with GTP-bound translation factors. This is Large ribosomal subunit protein uL10 from Anaeromyxobacter dehalogenans (strain 2CP-1 / ATCC BAA-258).